We begin with the raw amino-acid sequence, 75 residues long: SPbeta prophage-derived uncharacterized protein YomT (75 aa).

The chain is SPbeta prophage-derived uncharacterized protein YomT (yomT) from Bacillus subtilis (strain 168).